A 1896-amino-acid polypeptide reads, in one-letter code: Obscurin-like protein 1 (1896 aa).

At Ser-10 the chain carries Phosphoserine. Residues 12-100 enclose the Ig-like 1 domain; that stretch reads PCFLRFPRPV…GEAYAAAAVT (89 aa). The tract at residues 17–19 is interaction with TTN; sequence FPR. The cysteines at positions 33 and 84 are disulfide-linked. The interval 85 to 94 is interaction with TTN; sequence RARNAAGEAY. The segment at 106–127 is disordered; that stretch reads ASDPELQPAERPLPSPGSGEGA. Ig-like domains follow at residues 128 to 225, 243 to 330, and 339 to 425; these read PVFL…ALLQ, PVVE…QTLS, and PRLR…ANVT. 3 cysteine pairs are disulfide-bonded: Cys-149/Cys-209, Cys-267/Cys-319, and Cys-362/Cys-412. The region spanning 517-615 is the Fibronectin type-III domain; that stretch reads PPGPPILAEM…FHGSAHLVPT (99 aa). 10 Ig-like domains span residues 714–800, 804–893, 902–982, 986–1075, 1078–1172, 1174–1261, 1265–1357, 1357–1534, 1628–1720, and 1794–1896; these read PVHI…FGVT, PPVH…VTIT, PSGK…FTVT, PPVR…VTVT, PERI…PPVQ, LALE…FTVQ, PPVR…VEEP, PLLV…ARLS, PVTI…RTVA, and PAQS…VEGN. Disulfide bonds link Cys-738/Cys-788, Cys-829/Cys-879, Cys-920/Cys-970, Cys-1011/Cys-1061, Cys-1103/Cys-1153, and Cys-1195/Cys-1245. Intrachain disulfides connect Cys-1381-Cys-1522 and Cys-1650-Cys-1700.

Component of the 3M complex, composed of core components CUL7, CCDC8 and OBSL1. Interacts with CCDC8. Interacts with CUL7; the interaction is direct. Interacts with FBXW8. Interacts (via N-terminal Ig-like domain) with TTN/titin (via C-terminal Ig-like domain); the interaction is direct. In terms of tissue distribution, widely expressed, with predominant levels found in the heart.

The protein resides in the cytoplasm. The protein localises to the cytoskeleton. Its subcellular location is the microtubule organizing center. It is found in the centrosome. It localises to the perinuclear region. The protein resides in the golgi apparatus. In terms of biological role, core component of the 3M complex, a complex required to regulate microtubule dynamics and genome integrity. It is unclear how the 3M complex regulates microtubules, it could act by controlling the level of a microtubule stabilizer. Acts as a regulator of the Cul7-RING(FBXW8) ubiquitin-protein ligase, playing a critical role in the ubiquitin ligase pathway that regulates Golgi morphogenesis and dendrite patterning in brain. Required to localize CUL7 to the Golgi apparatus in neurons. The protein is Obscurin-like protein 1 of Homo sapiens (Human).